The chain runs to 447 residues: 3-phosphoshikimate 1-carboxyvinyltransferase (447 aa).

3 residues coordinate 3-phosphoshikimate: lysine 25, serine 26, and arginine 30. Lysine 25 lines the phosphoenolpyruvate pocket. Phosphoenolpyruvate is bound by residues glycine 96 and arginine 124. 3-phosphoshikimate contacts are provided by serine 171, serine 172, glutamine 173, serine 203, aspartate 325, and lysine 352. Glutamine 173 serves as a coordination point for phosphoenolpyruvate. Aspartate 325 serves as the catalytic Proton acceptor. Positions 356, 400, and 425 each coordinate phosphoenolpyruvate.

This sequence belongs to the EPSP synthase family. In terms of assembly, monomer.

Its subcellular location is the cytoplasm. It catalyses the reaction 3-phosphoshikimate + phosphoenolpyruvate = 5-O-(1-carboxyvinyl)-3-phosphoshikimate + phosphate. The protein operates within metabolic intermediate biosynthesis; chorismate biosynthesis; chorismate from D-erythrose 4-phosphate and phosphoenolpyruvate: step 6/7. Catalyzes the transfer of the enolpyruvyl moiety of phosphoenolpyruvate (PEP) to the 5-hydroxyl of shikimate-3-phosphate (S3P) to produce enolpyruvyl shikimate-3-phosphate and inorganic phosphate. The chain is 3-phosphoshikimate 1-carboxyvinyltransferase from Bordetella petrii (strain ATCC BAA-461 / DSM 12804 / CCUG 43448).